Consider the following 484-residue polypeptide: Cysteine--tRNA ligase (484 aa).

C29 lines the Zn(2+) pocket. Positions 31–41 (ITVYDYCHLGH) match the 'HIGH' region motif. Zn(2+) is bound by residues C215, H240, and E244. Residues 272 to 276 (KMSKS) carry the 'KMSKS' region motif. K275 lines the ATP pocket.

This sequence belongs to the class-I aminoacyl-tRNA synthetase family. In terms of assembly, monomer. Zn(2+) is required as a cofactor.

Its subcellular location is the cytoplasm. The enzyme catalyses tRNA(Cys) + L-cysteine + ATP = L-cysteinyl-tRNA(Cys) + AMP + diphosphate. This Rippkaea orientalis (strain PCC 8801 / RF-1) (Cyanothece sp. (strain PCC 8801)) protein is Cysteine--tRNA ligase.